The sequence spans 699 residues: MSDADVDAESNPYLRDPPTEFEPAESLSREAAEGQAALLREAVREHDHRYYVAADPLVSDAAYDALFSRLVALEDAFDLDTTNSPTNRVGGEPIDALETVEHVAPMLSIDQSTDADDLREFDERVRREVGAVDYVCEPKFDGLSVEVVYEDGEFVRAATRGDGRRGDDVSAQVKTIPTVPLSLRGDHPDRLAVRGEIYMPKSDFSDLNARRVEAGEDAFANPRNAAAGTLRNLDPSVVADRPLAVFFYDILDASARPDSQWAALDRLREWGLRVTDRIERAEDVAEAIDYRDRMQAARDDLDYEIDGTVIKVDSRDARERLGEKSRSVRWAFAYKFPARHEVTTVRDIVVQVGRTGRLTPVAILDPVDVGGVTVSRATLHNPDERAALGVAVGDRVRVKRAGDVIPQVVEVTEDGGGCYEFPDECPVCGSAVDRDGPLAFCSGGLSCPAQREASIGHFAVKGAMDIDGLGEERVAQLVDAGLVETVADLYDLTADDLAELEGWGETSAENLVAAVENAKHPSLDSFLVGLSIPEVGEATARGLAREFGSIEAFPIEADAEEDEFDAFEERLTTVPDVGETVARRVRDFFENADNRAVIRALLDRGVDPEPVESGGDELDGLTFVVTGTLAASRSDVTELVESHGGNVTGSVSGNTDYLVVGENPGRSKRDDAEANDVPTLAETEFEALLAERGVAYPPE.

The segment at 1–29 (MSDADVDAESNPYLRDPPTEFEPAESLSR) is disordered. NAD(+) is bound by residues 60 to 64 (DAAYD), 108 to 109 (SI), and glutamate 137. Catalysis depends on lysine 139, which acts as the N6-AMP-lysine intermediate. NAD(+)-binding residues include arginine 160, glutamate 196, lysine 311, and lysine 335. Cysteine 425, cysteine 428, cysteine 441, and cysteine 447 together coordinate Zn(2+). The region spanning 613–666 (SGGDELDGLTFVVTGTLAASRSDVTELVESHGGNVTGSVSGNTDYLVVGENPGR) is the BRCT domain.

The protein belongs to the NAD-dependent DNA ligase family. LigA subfamily. Mg(2+) is required as a cofactor. The cofactor is Mn(2+).

It catalyses the reaction NAD(+) + (deoxyribonucleotide)n-3'-hydroxyl + 5'-phospho-(deoxyribonucleotide)m = (deoxyribonucleotide)n+m + AMP + beta-nicotinamide D-nucleotide.. Its activity is regulated as follows. Displays maximal in vitro activity at high salt levels. Its function is as follows. DNA ligase that catalyzes the formation of phosphodiester linkages between 5'-phosphoryl and 3'-hydroxyl groups in double-stranded DNA using NAD as a coenzyme and as the energy source for the reaction. It is essential for DNA replication and repair of damaged DNA. The chain is DNA ligase from Haloferax volcanii (strain ATCC 29605 / DSM 3757 / JCM 8879 / NBRC 14742 / NCIMB 2012 / VKM B-1768 / DS2) (Halobacterium volcanii).